Consider the following 400-residue polypeptide: CinA-like protein (400 aa).

It belongs to the CinA family.

The sequence is that of CinA-like protein from Sulfurihydrogenibium sp. (strain YO3AOP1).